The sequence spans 214 residues: Ribonuclease HII (214 aa).

The RNase H type-2 domain occupies 26–214 (EIVCGVDEAG…PVREAFDLIR (189 aa)). Residues Asp32, Glu33, and Asp124 each contribute to the a divalent metal cation site.

Belongs to the RNase HII family. It depends on Mn(2+) as a cofactor. The cofactor is Mg(2+).

Its subcellular location is the cytoplasm. It carries out the reaction Endonucleolytic cleavage to 5'-phosphomonoester.. Functionally, endonuclease that specifically degrades the RNA of RNA-DNA hybrids. This chain is Ribonuclease HII, found in Burkholderia thailandensis (strain ATCC 700388 / DSM 13276 / CCUG 48851 / CIP 106301 / E264).